The chain runs to 620 residues: 1-deoxy-D-xylulose-5-phosphate synthase (620 aa).

Residues His80 and 121–123 (GHS) each bind thiamine diphosphate. Asp152 contacts Mg(2+). Thiamine diphosphate-binding positions include 153-154 (GA), Asn181, Tyr288, and Glu370. Asn181 lines the Mg(2+) pocket.

It belongs to the transketolase family. DXPS subfamily. Homodimer. It depends on Mg(2+) as a cofactor. Thiamine diphosphate serves as cofactor.

The catalysed reaction is D-glyceraldehyde 3-phosphate + pyruvate + H(+) = 1-deoxy-D-xylulose 5-phosphate + CO2. It participates in metabolic intermediate biosynthesis; 1-deoxy-D-xylulose 5-phosphate biosynthesis; 1-deoxy-D-xylulose 5-phosphate from D-glyceraldehyde 3-phosphate and pyruvate: step 1/1. Functionally, catalyzes the acyloin condensation reaction between C atoms 2 and 3 of pyruvate and glyceraldehyde 3-phosphate to yield 1-deoxy-D-xylulose-5-phosphate (DXP). This Cronobacter sakazakii (strain ATCC BAA-894) (Enterobacter sakazakii) protein is 1-deoxy-D-xylulose-5-phosphate synthase.